Reading from the N-terminus, the 493-residue chain is Probable cytosol aminopeptidase (493 aa).

Positions 257 and 262 each coordinate Mn(2+). Lys-269 is an active-site residue. Mn(2+) is bound by residues Asp-281, Asp-341, and Glu-343. Residue Arg-345 is part of the active site.

It belongs to the peptidase M17 family. Requires Mn(2+) as cofactor.

It localises to the cytoplasm. The enzyme catalyses Release of an N-terminal amino acid, Xaa-|-Yaa-, in which Xaa is preferably Leu, but may be other amino acids including Pro although not Arg or Lys, and Yaa may be Pro. Amino acid amides and methyl esters are also readily hydrolyzed, but rates on arylamides are exceedingly low.. The catalysed reaction is Release of an N-terminal amino acid, preferentially leucine, but not glutamic or aspartic acids.. Presumably involved in the processing and regular turnover of intracellular proteins. Catalyzes the removal of unsubstituted N-terminal amino acids from various peptides. In Prochlorococcus marinus (strain MIT 9211), this protein is Probable cytosol aminopeptidase.